The following is a 501-amino-acid chain: L-arabinose isomerase (501 aa).

Glutamate 306, glutamate 333, histidine 350, and histidine 450 together coordinate Mn(2+).

The protein belongs to the arabinose isomerase family. As to quaternary structure, homohexamer. Mn(2+) is required as a cofactor.

The enzyme catalyses beta-L-arabinopyranose = L-ribulose. It participates in carbohydrate degradation; L-arabinose degradation via L-ribulose; D-xylulose 5-phosphate from L-arabinose (bacterial route): step 1/3. Functionally, catalyzes the conversion of L-arabinose to L-ribulose. This Pectobacterium atrosepticum (strain SCRI 1043 / ATCC BAA-672) (Erwinia carotovora subsp. atroseptica) protein is L-arabinose isomerase.